A 192-amino-acid chain; its full sequence is Adenylate kinase (192 aa).

10 to 18 (GVPGVGGTT) is an ATP binding site.

Belongs to the archaeal adenylate kinase family. Monomer.

The protein localises to the cytoplasm. It catalyses the reaction AMP + ATP = 2 ADP. The chain is Adenylate kinase from Methanococcus maripaludis (strain C5 / ATCC BAA-1333).